The primary structure comprises 268 residues: MLADIIRAIILGVVEGVTEFLPVSSTGHLLLAERFFNLGEGPFWKSFAVLIQLGAILAILALYFSKLWNIARGMFSDPAAQRFVIGVLVAFLPAAVIGAASGGLIKEYLFNPWVVCFTLILGGGILLWVDQLELKPVHHEATEFPLPMYLIIGFAQCIAMFPGVSRSGATIVGAMLLGADRRAAAEFSFFLAIPTMLGAFVYDLYKSRADMTMDHGLIVAVGFAVSFITAIIVVKTFLTYVTRHGFALFAWWRVIVGTLGLIALALGR.

Transmembrane regions (helical) follow at residues 47 to 67, 85 to 105, 109 to 129, 144 to 164, 184 to 204, 217 to 237, and 246 to 266; these read FAVL…FSKL, IGVL…GGLI, LFNP…LLWV, FPLP…FPGV, AAEF…VYDL, LIVA…VKTF, and FALF…ALAL.

Belongs to the UppP family.

Its subcellular location is the cell inner membrane. The catalysed reaction is di-trans,octa-cis-undecaprenyl diphosphate + H2O = di-trans,octa-cis-undecaprenyl phosphate + phosphate + H(+). Catalyzes the dephosphorylation of undecaprenyl diphosphate (UPP). Confers resistance to bacitracin. In Rhodopseudomonas palustris (strain BisA53), this protein is Undecaprenyl-diphosphatase.